The following is a 414-amino-acid chain: Eukaryotic initiation factor 4A-3 (414 aa).

A Q motif motif is present at residues 41 to 69; the sequence is ESFDDMGLQENLLRGIYAYGFEKPSAIQQ. The Helicase ATP-binding domain occupies 72 to 242; sequence IVPFCKGLDV…RKFMNKPVRI (171 aa). 85–92 serves as a coordination point for ATP; sequence AQSGTGKT. The DEAD box motif lies at 190-193; it reads DEAD. Positions 253–414 constitute a Helicase C-terminal domain; the sequence is GIKQFYVNVE…ELPANVADLL (162 aa).

It belongs to the DEAD box helicase family. eIF4A subfamily. EIF4F is a multi-subunit complex, the composition of which varies with external and internal environmental conditions. It is composed of at least EIF4A, EIF4E and EIF4G. Interacts with DRM2 (via UBA domains).

The protein resides in the cytoplasm. It localises to the nucleus. The enzyme catalyses ATP + H2O = ADP + phosphate + H(+). ATP-dependent RNA helicase which is a subunit of the eIF4F complex involved in cap recognition and is required for mRNA binding to ribosome. In the current model of translation initiation, eIF4A unwinds RNA secondary structures in the 5'-UTR of mRNAs which is necessary to allow efficient binding of the small ribosomal subunit, and subsequent scanning for the initiator codon. This chain is Eukaryotic initiation factor 4A-3, found in Oryza sativa subsp. japonica (Rice).